Consider the following 538-residue polypeptide: Lipid scramblase CLPTM1L (538 aa).

Topologically, residues 1–10 (MWSGRSSFTS) are cytoplasmic. A helical membrane pass occupies residues 11–31 (LVVGVFVVYVVHTCWVMYGIV). Residues 32–284 (YTRPCSGDAN…VKGIFVDTNL (253 aa)) lie on the Extracellular side of the membrane. 3 N-linked (GlcNAc...) asparagine glycosylation sites follow: Asn91, Asn101, and Asn229. Residues 285–305 (YFLALTFFVAAFHLLFDFLAF) traverse the membrane as a helical segment. Over 306-324 (KNDISFWKKKKSMIGMSTK) the chain is Cytoplasmic. The chain crosses the membrane as a helical span at residues 325–342 (AVLWRCFSTVVIFLFLLD). Topologically, residues 343–346 (EQTS) are extracellular. A helical membrane pass occupies residues 347-364 (LLVLVPAGVGAAIELWKV). Topologically, residues 365-402 (KKALKMTIFWRGLMPEFQFGTYSESERKTEEYDTQAMK) are cytoplasmic. The chain crosses the membrane as a helical span at residues 403 to 423 (YLSYLLYPLCVGGAVYSLLNI). At 424 to 428 (KYKSW) the chain is on the extracellular side. The helical transmembrane segment at 429-449 (YSWLINSFVNGVYAFGFLFML) threads the bilayer. Residues 450 to 538 (PQLFVNYKLK…EKATRAPHTD (89 aa)) lie on the Cytoplasmic side of the membrane.

The protein belongs to the CLPTM1 family. Ubiquitously expressed.

Its subcellular location is the endoplasmic reticulum membrane. The catalysed reaction is a 6-(alpha-D-glucosaminyl)-1-(1,2-diacyl-sn-glycero-3-phospho)-1D-myo-inositol(in) = a 6-(alpha-D-glucosaminyl)-1-(1,2-diacyl-sn-glycero-3-phospho)-1D-myo-inositol(out). The enzyme catalyses 6-(alpha-D-glucosaminyl)-(1-octadecanoyl,2-(9Z)-octadecenoyl-sn-glycero-3-phospho)-1D-myo-inositol(in) = 6-(alpha-D-glucosaminyl)-(1-octadecanoyl,2-(9Z)-octadecenoyl-sn-glycero-3-phospho)-1D-myo-inositol(out). It catalyses the reaction a 1,2-diacyl-sn-glycero-3-phospho-(1D-myo-inositol)(in) = a 1,2-diacyl-sn-glycero-3-phospho-(1D-myo-inositol)(out). It carries out the reaction a 1,2-diacyl-sn-glycero-3-phosphocholine(in) = a 1,2-diacyl-sn-glycero-3-phosphocholine(out). The catalysed reaction is a 1,2-diacyl-sn-glycero-3-phosphoethanolamine(in) = a 1,2-diacyl-sn-glycero-3-phosphoethanolamine(out). In terms of biological role, scramblase that mediates the translocation of glucosaminylphosphatidylinositol (alpha-D-GlcN-(1-6)-(1,2-diacyl-sn-glycero-3-phospho)-1D-myo-inositol, GlcN-PI) across the endoplasmic reticulum (ER) membrane, from the cytosolic leaflet to the luminal leaflet of the ER membrane, where it participates in the biosynthesis of glycosylphosphatidylinositol (GPI). GPI is a lipid glycoconjugate involved in post-translational modification of proteins. Can also translocate 1,2-diacyl-sn-glycero-3-phospho-(1D-myo-inositol) (phosphatidylinositol or PI), as well as several other phospholipids (1,2-diacyl-sn-glycero-3-phosphocholine, 1,2-diacyl-sn-glycero-3-phosphoethanolamine), and N-acetylglucosaminylphosphatidylinositol (GlcNAc-PI) in vitro. This is Lipid scramblase CLPTM1L (CLPTM1L) from Homo sapiens (Human).